Reading from the N-terminus, the 551-residue chain is NAD(P)H-quinone oxidoreductase chain 4 (551 aa).

14 helical membrane passes run 25–45 (FPWL…VPFI), 56–76 (WFAL…YLNG), 111–131 (LILL…PVTF), 133–153 (PKLF…VFAV), 157–177 (LLFF…LAIW), 189–209 (FILY…AMGF), 233–253 (LLCY…VPLH), 264–284 (TAPV…YALM), 298–318 (FAPL…LTSF), 335–355 (MGFV…GAML), 356–376 (QMIS…ATYD), 397–417 (FALW…SGFV), 438–458 (IVID…LLSM), and 485–505 (VYII…PRLM).

This sequence belongs to the complex I subunit 4 family.

Its subcellular location is the cellular thylakoid membrane. It carries out the reaction a plastoquinone + NADH + (n+1) H(+)(in) = a plastoquinol + NAD(+) + n H(+)(out). The catalysed reaction is a plastoquinone + NADPH + (n+1) H(+)(in) = a plastoquinol + NADP(+) + n H(+)(out). Functionally, NDH-1 shuttles electrons from NAD(P)H, via FMN and iron-sulfur (Fe-S) centers, to quinones in the respiratory chain. The immediate electron acceptor for the enzyme in this species is believed to be plastoquinone. Couples the redox reaction to proton translocation (for every two electrons transferred, four hydrogen ions are translocated across the cytoplasmic membrane), and thus conserves the redox energy in a proton gradient. This Synechococcus sp. (strain WH7803) protein is NAD(P)H-quinone oxidoreductase chain 4.